Here is a 454-residue protein sequence, read N- to C-terminus: Bifunctional protein GlmU (454 aa).

The pyrophosphorylase stretch occupies residues 1-228; the sequence is MNKCAIILAA…FEETLGVNSR (228 aa). Residues 8–11, lysine 22, glutamine 73, and 78–79 contribute to the UDP-N-acetyl-alpha-D-glucosamine site; these read LAAG and GT. Residue aspartate 103 coordinates Mg(2+). Positions 140, 154, 169, and 226 each coordinate UDP-N-acetyl-alpha-D-glucosamine. Mg(2+) is bound at residue asparagine 226. A linker region spans residues 229-249; it reads AELAKVESIMRNRINRTHLDN. Residues 250–454 form an N-acetyltransferase region; sequence GVTIIDPLNT…EGWVERKKLK (205 aa). UDP-N-acetyl-alpha-D-glucosamine contacts are provided by arginine 331 and lysine 349. Histidine 361 (proton acceptor) is an active-site residue. Residues tyrosine 364 and asparagine 375 each coordinate UDP-N-acetyl-alpha-D-glucosamine. Acetyl-CoA is bound by residues 384-385, alanine 421, and arginine 438; that span reads NY.

In the N-terminal section; belongs to the N-acetylglucosamine-1-phosphate uridyltransferase family. The protein in the C-terminal section; belongs to the transferase hexapeptide repeat family. Homotrimer. Requires Mg(2+) as cofactor.

Its subcellular location is the cytoplasm. The enzyme catalyses alpha-D-glucosamine 1-phosphate + acetyl-CoA = N-acetyl-alpha-D-glucosamine 1-phosphate + CoA + H(+). It catalyses the reaction N-acetyl-alpha-D-glucosamine 1-phosphate + UTP + H(+) = UDP-N-acetyl-alpha-D-glucosamine + diphosphate. The protein operates within nucleotide-sugar biosynthesis; UDP-N-acetyl-alpha-D-glucosamine biosynthesis; N-acetyl-alpha-D-glucosamine 1-phosphate from alpha-D-glucosamine 6-phosphate (route II): step 2/2. Its pathway is nucleotide-sugar biosynthesis; UDP-N-acetyl-alpha-D-glucosamine biosynthesis; UDP-N-acetyl-alpha-D-glucosamine from N-acetyl-alpha-D-glucosamine 1-phosphate: step 1/1. It participates in bacterial outer membrane biogenesis; LPS lipid A biosynthesis. In terms of biological role, catalyzes the last two sequential reactions in the de novo biosynthetic pathway for UDP-N-acetylglucosamine (UDP-GlcNAc). The C-terminal domain catalyzes the transfer of acetyl group from acetyl coenzyme A to glucosamine-1-phosphate (GlcN-1-P) to produce N-acetylglucosamine-1-phosphate (GlcNAc-1-P), which is converted into UDP-GlcNAc by the transfer of uridine 5-monophosphate (from uridine 5-triphosphate), a reaction catalyzed by the N-terminal domain. This is Bifunctional protein GlmU from Clostridium perfringens (strain SM101 / Type A).